Reading from the N-terminus, the 114-residue chain is Hydrogenase maturation factor HypA (114 aa).

H2 provides a ligand contact to Ni(2+). Residues C73, C76, C89, and C92 each coordinate Zn(2+).

Belongs to the HypA/HybF family.

Functionally, involved in the maturation of [NiFe] hydrogenases. Required for nickel insertion into the metal center of the hydrogenase. The protein is Hydrogenase maturation factor HypA of Desulfitobacterium hafniense (strain DSM 10664 / DCB-2).